Consider the following 274-residue polypeptide: MYPLTSDIASITSTQNPLVKQLRQLHQTKGRKQQGQLLLEGTHLLEVALAQGKGFNHGCFTAMWQEKNPVLADRLMAQSVHSYLVSGEVLAKMASTVNPDGVVATLTMDQFWRSPPPHARLGLVLERLQDPGNLGTILRTAAATGVEGIWLTADCVDPTSPKVLRSSAGSSLLLPQQQLQSLPPLLEKFHTQGLQLIATVPQATQTLWEIDFQRPTIVIFGSEGQGLSAPVLELTTHQVAIPQAPQVESLNVAIAVGVMLYEARRQQWAASTPG.

The protein belongs to the class IV-like SAM-binding methyltransferase superfamily. RNA methyltransferase TrmH family.

This is an uncharacterized protein from Synechocystis sp. (strain ATCC 27184 / PCC 6803 / Kazusa).